We begin with the raw amino-acid sequence, 235 residues long: Small ribosomal subunit protein uS2 (235 aa).

This sequence belongs to the universal ribosomal protein uS2 family.

The protein is Small ribosomal subunit protein uS2 of Geobacillus kaustophilus (strain HTA426).